Consider the following 528-residue polypeptide: Importin subunit alpha-7 (528 aa).

The IBB domain occupies 1–56 (MKGGETMSVRRSGYKAVVDGVGGRRRREDDMVEIRKAKREESLLKKRREALPHSPS). ARM repeat units lie at residues 93–133 (NVRV…NIAS), 136–175 (SENTEVVIDHGAVAILVRLLNSPYDVVREQVVWALGNISG), 178–218 (PRCR…NLCR), 220–259 (KPQPPFDQVSAALPALAQLIRLDDKELLAYTCWALVYLSD), 262–301 (NEKIQAVIEANVCARLIGLSIHRSPSVITPALRTIGNIVT), 304–344 (DSQT…NITA), 347–386 (QSQIQAVFDADICPALVNLLQNSEGDVKKEAAWAICNAIA), and 390–429 (YKQIMFLVKQECIKPLCDLLTCSDTQLVMVCLEALKKILK).

This sequence belongs to the importin alpha family. Forms a complex with importin subunit beta-1.

It localises to the nucleus envelope. Functionally, binds to conventional NLS motifs and mediates nuclear protein import across the nuclear envelope. Acts as a cellular receptor for the nuclear import of the virD2 protein of Agrobacterium, but is not essential for Agrobacterium-mediated root transformation. The polypeptide is Importin subunit alpha-7 (Arabidopsis thaliana (Mouse-ear cress)).